Consider the following 371-residue polypeptide: uncharacterized protein (371 aa).

Solcar repeat units follow at residues D3–L98, R131–F276, and K284–W369. Helical transmembrane passes span A9–V29, G73–E93, I137–V157, L253–F273, V290–L310, and Y341–S362.

Belongs to the mitochondrial carrier (TC 2.A.29) family.

The protein localises to the mitochondrion inner membrane. This is an uncharacterized protein from Schizosaccharomyces pombe (strain 972 / ATCC 24843) (Fission yeast).